The following is a 254-amino-acid chain: 3-dehydroquinate dehydratase (254 aa).

3-dehydroquinate is bound by residues 47–49 (EFR) and Arg83. The active-site Proton donor/acceptor is the His144. Residue Lys171 is the Schiff-base intermediate with substrate of the active site. 3 residues coordinate 3-dehydroquinate: Arg213, Ser232, and Gln236.

Belongs to the type-I 3-dehydroquinase family. Homodimer.

It catalyses the reaction 3-dehydroquinate = 3-dehydroshikimate + H2O. It participates in metabolic intermediate biosynthesis; chorismate biosynthesis; chorismate from D-erythrose 4-phosphate and phosphoenolpyruvate: step 3/7. In terms of biological role, involved in the third step of the chorismate pathway, which leads to the biosynthesis of aromatic amino acids. Catalyzes the cis-dehydration of 3-dehydroquinate (DHQ) and introduces the first double bond of the aromatic ring to yield 3-dehydroshikimate. This Neisseria meningitidis serogroup C / serotype 2a (strain ATCC 700532 / DSM 15464 / FAM18) protein is 3-dehydroquinate dehydratase.